Reading from the N-terminus, the 418-residue chain is MSDSPAPLADPHLVYDPVAGDGPKDVVVLGSTGSIGTQAIDLVLRNPDRFRVTALSANGGRVALLAEQAYRLKARTVAVAREDVVPALREALTAQYGTGEPLPEILAGPEAATQLAASDCHTVLNGITGSIGLAPTLAALEAGRTLALANKESLIVGGPLVKALAKPGQIIPVDSEHAALFQALAAGTRADVRKLVVTASGGPFRGRTRDELAAVTVEDALAHPTWAMGPVITINSATLVNKGLEVIEAHLLYDIPFDRIEVVVHPQSYVHSMVEYTDGSTLAHATPPDMGGPIAVGLGWPERVPDAAPAFDWSKASTWEFFPLDNEAFPSVDLARHVGQLAGTAPAVFNAANEECVEAFRSGALPFLGIMETVTRVVEEHGTPRTGTSLTVADVLEAETWARARARQLAAQTAEARA.

Residues Thr32, Gly33, Ser34, Ile35, and Asn150 each contribute to the NADPH site. Residue Lys151 participates in 1-deoxy-D-xylulose 5-phosphate binding. Glu152 contacts NADPH. Mn(2+) is bound at residue Asp174. 1-deoxy-D-xylulose 5-phosphate-binding residues include Ser175, Glu176, Ser200, and His223. Residue Glu176 participates in Mn(2+) binding. Gly229 contributes to the NADPH binding site. Residues Ser236, Asn241, Lys242, and Glu245 each coordinate 1-deoxy-D-xylulose 5-phosphate. Glu245 contributes to the Mn(2+) binding site.

Belongs to the DXR family. Mg(2+) is required as a cofactor. It depends on Mn(2+) as a cofactor.

It catalyses the reaction 2-C-methyl-D-erythritol 4-phosphate + NADP(+) = 1-deoxy-D-xylulose 5-phosphate + NADPH + H(+). The protein operates within isoprenoid biosynthesis; isopentenyl diphosphate biosynthesis via DXP pathway; isopentenyl diphosphate from 1-deoxy-D-xylulose 5-phosphate: step 1/6. Functionally, catalyzes the NADPH-dependent rearrangement and reduction of 1-deoxy-D-xylulose-5-phosphate (DXP) to 2-C-methyl-D-erythritol 4-phosphate (MEP). The protein is 1-deoxy-D-xylulose 5-phosphate reductoisomerase of Streptomyces coelicolor (strain ATCC BAA-471 / A3(2) / M145).